Reading from the N-terminus, the 201-residue chain is UPF0301 protein RHECIAT_CH0001061 (201 aa).

This sequence belongs to the UPF0301 (AlgH) family.

This Rhizobium etli (strain CIAT 652) protein is UPF0301 protein RHECIAT_CH0001061.